Reading from the N-terminus, the 344-residue chain is Heat-inducible transcription repressor HrcA (344 aa).

Belongs to the HrcA family.

In terms of biological role, negative regulator of class I heat shock genes (grpE-dnaK-dnaJ and groELS operons). Prevents heat-shock induction of these operons. In Streptococcus sanguinis (strain SK36), this protein is Heat-inducible transcription repressor HrcA.